The chain runs to 540 residues: Zona pellucida sperm-binding protein 4 (540 aa).

The N-terminal stretch at 1-18 (MWLLRCVLLCVSLSLAVS) is a signal peptide. The Extracellular segment spans residues 19 to 505 (GQHKPEAPDY…EKLRVPVDSK (487 aa)). N-linked (GlcNAc...) asparagine glycosylation is present at Asn-69. The P-type domain occupies 141–183 (DWCDSIPARDRLPCAPSPISRGDCEGLGCCYSSEEVNSCYYGN). The ZP domain occupies 188-466 (HCTREGHFSI…VTCPDLSRRR (279 aa)). 3 N-linked (GlcNAc...) asparagine glycosylation sites follow: Asn-202, Asn-219, and Asn-267. O-linked (GalNAc...) threonine glycosylation is present at Thr-302. Cys-367 and Cys-442 form a disulfide bridge. Positions 463-540 (SRRRNFDNSS…QKSCPDQMCQ (78 aa)) are cleaved as a propeptide — removed in mature form. Asn-470 and Asn-474 each carry an N-linked (GlcNAc...) asparagine glycan. A helical membrane pass occupies residues 506 to 526 (VLWVAGLSGTLILGALLVSYL). The Cytoplasmic portion of the chain corresponds to 527–540 (AVKKQKSCPDQMCQ).

It belongs to the ZP domain family. ZPB subfamily. In terms of processing, proteolytically cleaved before the transmembrane segment to yield the secreted ectodomain incorporated in the zona pellucida. As to expression, expressed in oocytes.

The protein resides in the zona pellucida. It localises to the cell membrane. Component of the zona pellucida, an extracellular matrix surrounding oocytes which mediates sperm binding, induction of the acrosome reaction and prevents post-fertilization polyspermy. The zona pellucida is composed of 3 to 4 glycoproteins, ZP1, ZP2, ZP3, and ZP4. ZP4 may act as a sperm receptor. The chain is Zona pellucida sperm-binding protein 4 (ZP4) from Homo sapiens (Human).